The primary structure comprises 189 residues: Protein Rex (189 aa).

The span at 1–16 shows a compositional bias: basic residues; that stretch reads MPKTRRRPRRSQRKRP. A disordered region spans residues 1-28; sequence MPKTRRRPRRSQRKRPPTPWPTSQGLDR. Positions 2–18 match the Nuclear localization signal, and RNA-binding (RxRE) motif; the sequence is PKTRRRPRRSQRKRPPT. Residues 56–70 form a homomultimerization region; the sequence is RPVYIVTPYWPPVQS. S70 bears the Phosphoserine; by host mark. Residues 82 to 93 carry the Nuclear export signal motif; sequence LSAQLYSSLSLD. A compositionally biased stretch (low complexity) spans 84–94; sequence AQLYSSLSLDS. Residues 84–189 form a disordered region; it reads AQLYSSLSLD…PPSPGPSCPT (106 aa). The span at 111–125 shows a compositional bias: pro residues; it reads RRPPIQPPTFHPPSS. A homomultimerization region spans residues 123-131; sequence PSSRPCANT. The span at 127–164 shows a compositional bias: polar residues; that stretch reads PCANTPPSETDTWNPPLGSTSQPCLFQTPASGPKTCTP. T174 bears the Phosphothreonine; by host mark. Position 177 is a phosphoserine; by host (S177). Residues 178-189 are compositionally biased toward pro residues; it reads FPPPSPGPSCPT.

Belongs to the deltaretrovirus Rex protein family. In terms of assembly, homomultimer. Multimeric assembly is essential for activity and involves XPO1. Binds to human XPO1 and KPNB1. Interacts (via N-terminal nuclear localization signal) with human NPM1. In terms of processing, phosphorylated.

Its subcellular location is the host nucleus. The protein localises to the host nucleolus. It is found in the host cytoplasm. Rex escorts unspliced gag-pro-pol and singly spliced env mRNAs out of the nucleus of infected cells. These mRNAs carry a recognition sequence called Rex responsive element (RxRE or XRE) located at the 3' region of the long terminal repeat (LTR). This function is essential since most HTLV proteins are translated from unspliced or partially spliced pre-mRNAs that cannot exit the nucleus by the pathway used by fully processed cellular mRNAs. Rex itself is translated from a fully spliced mRNA that probably readily exits the nucleus. Rex's nuclear localization signal (NLS) binds directly to KPNB1/importin beta-1 without previous binding to KPNA1/importin alpha-1. KPNB1 binds to the GDP bound form of RAN (Ran-GDP) and targets Rex to the nucleus. In the nucleus, the conversion from Ran-GDP to Ran-GTP dissociates Rex from KPNB1 and allows Rex's binding to the RRE in viral pre-mRNAs. Rex multimerizes on the RRE via cooperative assembly. This multimerization is critical for its full biological activity, since it may shield the viral RNA from being spliced or down-regulated, and probably exposes Rex's nuclear export signal (NES) to the surface. Rex can then form a complex with XPO1/CRM1, RANBP3 and Ran-GTP, leading to nuclear export of the complex. Conversion from Ran-GTP to Ran-GDP mediates dissociation of the Rex/RRE/XPO1/RANBP3/RAN complex, so that Rex can return to the nucleus for a subsequent round of export. This Homo sapiens (Human) protein is Protein Rex.